Here is a 455-residue protein sequence, read N- to C-terminus: UDP-N-acetylmuramoylalanine--D-glutamate ligase (455 aa).

An ATP-binding site is contributed by 119–125 (GTNGKTT).

The protein belongs to the MurCDEF family.

The protein localises to the cytoplasm. It catalyses the reaction UDP-N-acetyl-alpha-D-muramoyl-L-alanine + D-glutamate + ATP = UDP-N-acetyl-alpha-D-muramoyl-L-alanyl-D-glutamate + ADP + phosphate + H(+). It participates in cell wall biogenesis; peptidoglycan biosynthesis. Functionally, cell wall formation. Catalyzes the addition of glutamate to the nucleotide precursor UDP-N-acetylmuramoyl-L-alanine (UMA). This chain is UDP-N-acetylmuramoylalanine--D-glutamate ligase, found in Listeria monocytogenes serotype 4b (strain F2365).